A 218-amino-acid chain; its full sequence is Phosphoribosylformylglycinamidine synthase subunit PurQ (218 aa).

The region spanning 2-218 (TIGIVVFPGS…IKILQALLSN (217 aa)) is the Glutamine amidotransferase type-1 domain. The Nucleophile role is filled by Cys86. Residues His194 and Glu196 contribute to the active site.

As to quaternary structure, part of the FGAM synthase complex composed of 1 PurL, 1 PurQ and 2 PurS subunits.

It is found in the cytoplasm. It carries out the reaction N(2)-formyl-N(1)-(5-phospho-beta-D-ribosyl)glycinamide + L-glutamine + ATP + H2O = 2-formamido-N(1)-(5-O-phospho-beta-D-ribosyl)acetamidine + L-glutamate + ADP + phosphate + H(+). It catalyses the reaction L-glutamine + H2O = L-glutamate + NH4(+). It functions in the pathway purine metabolism; IMP biosynthesis via de novo pathway; 5-amino-1-(5-phospho-D-ribosyl)imidazole from N(2)-formyl-N(1)-(5-phospho-D-ribosyl)glycinamide: step 1/2. Functionally, part of the phosphoribosylformylglycinamidine synthase complex involved in the purines biosynthetic pathway. Catalyzes the ATP-dependent conversion of formylglycinamide ribonucleotide (FGAR) and glutamine to yield formylglycinamidine ribonucleotide (FGAM) and glutamate. The FGAM synthase complex is composed of three subunits. PurQ produces an ammonia molecule by converting glutamine to glutamate. PurL transfers the ammonia molecule to FGAR to form FGAM in an ATP-dependent manner. PurS interacts with PurQ and PurL and is thought to assist in the transfer of the ammonia molecule from PurQ to PurL. The protein is Phosphoribosylformylglycinamidine synthase subunit PurQ of Prochlorococcus marinus (strain SARG / CCMP1375 / SS120).